The following is a 507-amino-acid chain: RNA-splicing ligase RtcB homolog (507 aa).

Mn(2+) is bound by residues D121, C124, H229, H261, and H355. 228–232 (NHYAE) serves as a coordination point for GMP. GMP is bound by residues 355–356 (HN), 404–407 (GGTM), S411, 430–433 (HGAG), and K506. H430 (GMP-histidine intermediate) is an active-site residue.

It belongs to the RtcB family. As to quaternary structure, catalytic component of the tRNA-splicing ligase complex. Mn(2+) is required as a cofactor.

The catalysed reaction is a 3'-end 3'-phospho-ribonucleotide-RNA + a 5'-end dephospho-ribonucleoside-RNA + GTP = a ribonucleotidyl-ribonucleotide-RNA + GMP + diphosphate. The enzyme catalyses a 3'-end 2',3'-cyclophospho-ribonucleotide-RNA + a 5'-end dephospho-ribonucleoside-RNA + GTP + H2O = a ribonucleotidyl-ribonucleotide-RNA + GMP + diphosphate + H(+). Functionally, catalytic subunit of the tRNA-splicing ligase complex that acts by directly joining spliced tRNA halves to mature-sized tRNAs by incorporating the precursor-derived splice junction phosphate into the mature tRNA as a canonical 3',5'-phosphodiester. May act as an RNA ligase with broad substrate specificity, and may function toward other RNAs. The chain is RNA-splicing ligase RtcB homolog from Micromonas pusilla (strain CCMP1545) (Picoplanktonic green alga).